The sequence spans 270 residues: uncharacterized protein (270 aa).

Residues 34 to 266 (LIARGLTKSY…PDVRRLYLGD (233 aa)) enclose the ABC transporter domain. Position 66–73 (66–73 (GPNGAGKT)) interacts with ATP.

The protein belongs to the ABC transporter superfamily.

This is an uncharacterized protein from Rhizobium meliloti (strain 1021) (Ensifer meliloti).